We begin with the raw amino-acid sequence, 181 residues long: UPF0397 protein SUB0313 (181 aa).

5 consecutive transmembrane segments (helical) span residues 11-31, 45-65, 69-89, 114-134, and 147-167; these read AIGI…ITIF, LFSV…GHML, FAGY…GLGI, VQAL…DILI, and LFAA…LLIA.

This sequence belongs to the UPF0397 family.

The protein localises to the cell membrane. The sequence is that of UPF0397 protein SUB0313 from Streptococcus uberis (strain ATCC BAA-854 / 0140J).